A 213-amino-acid polypeptide reads, in one-letter code: Nucleoside triphosphate pyrophosphatase (213 aa).

Asp-77 (proton acceptor) is an active-site residue.

Belongs to the Maf family. A divalent metal cation is required as a cofactor.

Its subcellular location is the cytoplasm. It catalyses the reaction a ribonucleoside 5'-triphosphate + H2O = a ribonucleoside 5'-phosphate + diphosphate + H(+). The enzyme catalyses a 2'-deoxyribonucleoside 5'-triphosphate + H2O = a 2'-deoxyribonucleoside 5'-phosphate + diphosphate + H(+). Functionally, nucleoside triphosphate pyrophosphatase. May have a dual role in cell division arrest and in preventing the incorporation of modified nucleotides into cellular nucleic acids. In Cutibacterium acnes (strain DSM 16379 / KPA171202) (Propionibacterium acnes), this protein is Nucleoside triphosphate pyrophosphatase.